A 348-amino-acid chain; its full sequence is RNA 3'-terminal phosphate cyclase (348 aa).

Residues Gln107 and 290-294 (HLADQ) each bind ATP. His316 functions as the Tele-AMP-histidine intermediate in the catalytic mechanism.

It belongs to the RNA 3'-terminal cyclase family. Type 1 subfamily.

The protein localises to the cytoplasm. It carries out the reaction a 3'-end 3'-phospho-ribonucleotide-RNA + ATP = a 3'-end 2',3'-cyclophospho-ribonucleotide-RNA + AMP + diphosphate. Catalyzes the conversion of 3'-phosphate to a 2',3'-cyclic phosphodiester at the end of RNA. The mechanism of action of the enzyme occurs in 3 steps: (A) adenylation of the enzyme by ATP; (B) transfer of adenylate to an RNA-N3'P to produce RNA-N3'PP5'A; (C) and attack of the adjacent 2'-hydroxyl on the 3'-phosphorus in the diester linkage to produce the cyclic end product. The biological role of this enzyme is unknown but it is likely to function in some aspects of cellular RNA processing. The polypeptide is RNA 3'-terminal phosphate cyclase (Trichormus variabilis (strain ATCC 29413 / PCC 7937) (Anabaena variabilis)).